A 429-amino-acid chain; its full sequence is Protein S-Myc (429 aa).

Position 36 is a phosphotyrosine; by Tyr-kinases (Y36). The segment at 301-325 is disordered; it reads PLPYAEDARPLKKPRSQDPLGPLKC. The bHLH domain occupies 346-398; sequence ERRRNHNRMERQRRDIMRSSFLNLRDLVPELVHNEKAAKVVILKKATEYIHTL. The leucine-zipper stretch occupies residues 398–419; sequence LQTDESKLLVEREKLYERKQQL.

In terms of assembly, efficient DNA binding requires dimerization with another bHLH protein.

Its subcellular location is the nucleus. Has apoptosis-inducing activity. The polypeptide is Protein S-Myc (Mycs) (Rattus norvegicus (Rat)).